A 64-amino-acid polypeptide reads, in one-letter code: Translation machinery-associated protein 7 homolog (64 aa).

Residues Met-1–Lys-64 are disordered. The span at Met-27–Lys-38 shows a compositional bias: basic and acidic residues. Residues Met-27–Lys-50 adopt a coiled-coil conformation. Positions Ala-39–Lys-50 are enriched in low complexity. Residues Leu-53–Lys-64 show a composition bias toward gly residues.

The polypeptide is Translation machinery-associated protein 7 homolog (Drosophila melanogaster (Fruit fly)).